The following is a 258-amino-acid chain: Global transcriptional regulator CodY (258 aa).

The GAF domain stretch occupies residues 1-156; that stretch reads MSSLLEKTRQ…SATIIGLEIL (156 aa). The H-T-H motif DNA-binding region spans 204 to 223; it reads ASKIADKVGITRSVIVNALR.

Belongs to the CodY family.

It localises to the cytoplasm. In terms of biological role, DNA-binding global transcriptional regulator which is involved in the adaptive response to starvation and acts by directly or indirectly controlling the expression of numerous genes in response to nutrient availability. During rapid exponential growth, CodY is highly active and represses genes whose products allow adaptation to nutrient depletion. This chain is Global transcriptional regulator CodY, found in Clostridium tetani (strain Massachusetts / E88).